Here is a 733-residue protein sequence, read N- to C-terminus: MENLASLLKSHKLSQADYEHIVQILGREPNLVELGVFSAMWSEHCSYKSSKKYLRGFPTEAAWVIQGPGENAGVIDIGEGYAAVFKMESHNHPSFIEPYQGAATGVGGIMRDVFTMGARPVASLNAIRFGDIRRQDEIGKKHRYLLKGVVAGIGGYGNCMGVPTVGGEMSFEDCYNGNILVNAFTLGIAKSDEIFYGRAEGIGNPVIYVGSKTGRDGLGGAVMSSDSFDDAANQLRPTVQVGDPFAEKLLLEACLELFKTNYIVGIQDMGAAGLTSSSFEMAGRSGSGMIMHLDRVPMREQGMTPYELMLSESQERMLICAKKGYEEKVLEIFRKWELDAEVIGEVTSSGKMELFWHGEKCAEIPVLPVSEEAPMLDRPTKEPAYLAEIRSKGAQAPKEIDLKEAFMKLWSAPETMDKSWVYSQYDSMVQTNTIVGPGGGDGSLVRVKENGAALAMSADCNPRYCYLNPREGAKLAVAESGRNVAVRGARPLAITDCLNFGSPENPEVMWQFAEACEGIKEACKVLLTPVVSGNVSLYNQTNGVDIFPTPSIATVGLLPKAQKALLGAFKKEGNLLLLVGETKSEFGGSLYQKEVEGFLGGDAPVIDLHRELALWRFLEEANEAGFLESAKDVNVGGLAIALGKMSVLGQKGCKVKTALKGVDLFSESPSRAVLEVSSEHLAALESLAQKGGVALGVIGSVGGENLEIDSLSLPLQTLQEIYLRGFAKIVENL.

The active site involves histidine 44. Tyrosine 47 and lysine 86 together coordinate ATP. A Mg(2+)-binding site is contributed by glutamate 88. Substrate is bound by residues 89 to 92 (SHNH) and arginine 111. Histidine 90 serves as the catalytic Proton acceptor. Aspartate 112 is a Mg(2+) binding site. Glutamine 240 contributes to the substrate binding site. Aspartate 268 is a Mg(2+) binding site. 312–314 (ESQ) lines the substrate pocket. ATP-binding residues include aspartate 496 and glycine 533. Residue asparagine 534 participates in Mg(2+) binding. Residue serine 536 participates in substrate binding.

Belongs to the FGAMS family. In terms of assembly, monomer. Part of the FGAM synthase complex composed of 1 PurL, 1 PurQ and 2 PurS subunits.

It is found in the cytoplasm. It carries out the reaction N(2)-formyl-N(1)-(5-phospho-beta-D-ribosyl)glycinamide + L-glutamine + ATP + H2O = 2-formamido-N(1)-(5-O-phospho-beta-D-ribosyl)acetamidine + L-glutamate + ADP + phosphate + H(+). Its pathway is purine metabolism; IMP biosynthesis via de novo pathway; 5-amino-1-(5-phospho-D-ribosyl)imidazole from N(2)-formyl-N(1)-(5-phospho-D-ribosyl)glycinamide: step 1/2. In terms of biological role, part of the phosphoribosylformylglycinamidine synthase complex involved in the purines biosynthetic pathway. Catalyzes the ATP-dependent conversion of formylglycinamide ribonucleotide (FGAR) and glutamine to yield formylglycinamidine ribonucleotide (FGAM) and glutamate. The FGAM synthase complex is composed of three subunits. PurQ produces an ammonia molecule by converting glutamine to glutamate. PurL transfers the ammonia molecule to FGAR to form FGAM in an ATP-dependent manner. PurS interacts with PurQ and PurL and is thought to assist in the transfer of the ammonia molecule from PurQ to PurL. The protein is Phosphoribosylformylglycinamidine synthase subunit PurL of Wolinella succinogenes (strain ATCC 29543 / DSM 1740 / CCUG 13145 / JCM 31913 / LMG 7466 / NCTC 11488 / FDC 602W) (Vibrio succinogenes).